A 239-amino-acid chain; its full sequence is Purine nucleoside phosphorylase DeoD-type (239 aa).

H5 contacts a purine D-ribonucleoside. 2 residues coordinate phosphate: G21 and R25. N6-acetyllysine is present on K27. Residues R44 and 88–91 (RVGS) contribute to the phosphate site. Residues 180–182 (EME) and 204–205 (SD) each bind a purine D-ribonucleoside. D205 (proton donor) is an active-site residue.

The protein belongs to the PNP/UDP phosphorylase family. As to quaternary structure, homohexamer; trimer of homodimers.

It catalyses the reaction a purine D-ribonucleoside + phosphate = a purine nucleobase + alpha-D-ribose 1-phosphate. The catalysed reaction is a purine 2'-deoxy-D-ribonucleoside + phosphate = a purine nucleobase + 2-deoxy-alpha-D-ribose 1-phosphate. In terms of biological role, catalyzes the reversible phosphorolytic breakdown of the N-glycosidic bond in the beta-(deoxy)ribonucleoside molecules, with the formation of the corresponding free purine bases and pentose-1-phosphate. The chain is Purine nucleoside phosphorylase DeoD-type from Shigella dysenteriae serotype 1 (strain Sd197).